Here is a 496-residue protein sequence, read N- to C-terminus: RNA-binding motif protein, Y chromosome, family 1 member B (496 aa).

Residues 8–85 form the RRM domain; it reads GKLFIGGLNR…KAIKVEQAKK (78 aa). Disordered regions lie at residues 67 to 349 and 452 to 496; these read DMNG…HRDY and KDQR…SSRY. Composition is skewed to low complexity over residues 97–114 and 149–159; these read PASSRNRSPSGSLRSARG and PVKRGPSSRSG. Residues 175–184 show a composition bias toward polar residues; it reads NSWMGSQGPM. 6 stretches are compositionally biased toward basic and acidic residues: residues 204–214, 242–253, 276–289, 313–326, 335–349, and 484–496; these read RNDRMSTRHDG, DNGHSNRDEHSS, AYRDYGHSRRDESY, GYRDYGHSRRHESY, SSRETRDYAPPHRDY, and GESRSEKGDSSRY.

Interacts with splicing factor proteins SFRS3/SRP20, TRA2B/SFRS10, KHDRBS1/SAM68 and KHDRBS3. Testis-specific.

Its subcellular location is the nucleus. In terms of biological role, RNA-binding protein which may be involved in spermatogenesis. Required for sperm development, possibly by participating in pre-mRNA splicing in the testis. The polypeptide is RNA-binding motif protein, Y chromosome, family 1 member B (RBMY1B) (Homo sapiens (Human)).